A 426-amino-acid chain; its full sequence is Serine hydroxymethyltransferase (426 aa).

Residues Leu-122 and 126–128 (GHL) contribute to the (6S)-5,6,7,8-tetrahydrofolate site. Lys-231 bears the N6-(pyridoxal phosphate)lysine mark.

The protein belongs to the SHMT family. In terms of assembly, homodimer. The cofactor is pyridoxal 5'-phosphate.

The protein localises to the cytoplasm. The enzyme catalyses (6R)-5,10-methylene-5,6,7,8-tetrahydrofolate + glycine + H2O = (6S)-5,6,7,8-tetrahydrofolate + L-serine. It functions in the pathway one-carbon metabolism; tetrahydrofolate interconversion. It participates in amino-acid biosynthesis; glycine biosynthesis; glycine from L-serine: step 1/1. Its function is as follows. Catalyzes the reversible interconversion of serine and glycine with tetrahydrofolate (THF) serving as the one-carbon carrier. This reaction serves as the major source of one-carbon groups required for the biosynthesis of purines, thymidylate, methionine, and other important biomolecules. Also exhibits THF-independent aldolase activity toward beta-hydroxyamino acids, producing glycine and aldehydes, via a retro-aldol mechanism. The chain is Serine hydroxymethyltransferase from Koribacter versatilis (strain Ellin345).